The primary structure comprises 1069 residues: Kinesin-like protein vab-8 (1069 aa).

The region spanning 15–325 (PLRTIPKLRL…ACKIARTRVK (311 aa)) is the Kinesin motor domain. Disordered stretches follow at residues 328–374 (MGHG…LESG), 391–436 (SRTT…KSSP), and 572–598 (EQEEESMRTSTATTGGSKKDHPLRILS). 2 interaction with unc-51 regions span residues 331–517 (GRKP…KSKY) and 517–719 (YNLD…TVVD). 2 stretches are compositionally biased toward low complexity: residues 339–364 (SSGTMDSNGSSSSFGTTTITPGGTPR) and 391–407 (SRTTSPASTTMPSTPTS). The interval 403 to 877 (STPTSIRPLH…SAERDRKTSK (475 aa)) is interaction with unc-73. Residues 719–769 (DWSQIERKKEREKDAMEEEKRKEVLRERRAKLKITELEIKRERNMIDKELD) adopt a coiled-coil conformation. The segment at 786–960 (SLSPCRGGRT…RQSYSASSGY (175 aa)) is disordered. A compositionally biased stretch (low complexity) spans 824–847 (GGSLAKLSASGASGSGPPSSPSLG). Positions 883-897 (SSKERRSSGSKEELQ) are enriched in basic and acidic residues. The span at 906 to 928 (TSPKTYGGPGTSSSGRGSSAPGS) shows a compositional bias: low complexity. A compositionally biased stretch (polar residues) spans 938-960 (TEKTANGTMPRSKRQSYSASSGY). A coiled-coil region spans residues 990–1027 (LVRQADEIRHRQWQLKKELEEAKRAIGQEEDAKMIANS).

The protein belongs to the TRAFAC class myosin-kinesin ATPase superfamily. Kinesin family. KIF26 subfamily. In terms of assembly, interacts with unc-51 and unc-73. Phosphorylated by unc-51.

The protein localises to the cytoplasm. It is found in the cytoskeleton. Functionally, required for posterior migration of cells and axon growth cones during nervous system assembly. In PLM neuron, regulates innexin unc-9 gap junction turnover by suppressing unc-9 transport out of the gap junctions. The protein is Kinesin-like protein vab-8 (vab-8) of Caenorhabditis briggsae.